Consider the following 557-residue polypeptide: Probable asparagine synthetase [glutamine-hydrolyzing] (557 aa).

Cysteine 2 functions as the For GATase activity in the catalytic mechanism. Residues 2 to 188 (CGILAILNSL…PGHYFSSKTK (187 aa)) form the Glutamine amidotransferase type-2 domain. L-glutamine contacts are provided by residues 50 to 54 (RLAIV), 75 to 77 (NGE), and aspartate 101. The region spanning 217–466 (AIKEAFEQAV…LPSSVLWRQK (250 aa)) is the Asparagine synthetase domain. Residues leucine 239, isoleucine 279, and 353–354 (SG) each bind ATP. A disordered region spans residues 538-557 (WGASQDPSGRAQKVHLSTTE).

It carries out the reaction L-aspartate + L-glutamine + ATP + H2O = L-asparagine + L-glutamate + AMP + diphosphate + H(+). It functions in the pathway amino-acid biosynthesis; L-asparagine biosynthesis; L-asparagine from L-aspartate (L-Gln route): step 1/1. The chain is Probable asparagine synthetase [glutamine-hydrolyzing] (asns) from Dictyostelium discoideum (Social amoeba).